Here is a 229-residue protein sequence, read N- to C-terminus: Ribonuclease 3 (229 aa).

The 126-residue stretch at 7 to 132 folds into the RNase III domain; the sequence is LRAFESRIGH…VIAAVYLDAG (126 aa). Glu45 contributes to the Mg(2+) binding site. The active site involves Asp49. Asp118 and Glu121 together coordinate Mg(2+). Residue Glu121 is part of the active site. The DRBM domain maps to 157–226; sequence DAKTALQEWA…ARALLARMEA (70 aa).

Belongs to the ribonuclease III family. Homodimer. The cofactor is Mg(2+).

The protein localises to the cytoplasm. It carries out the reaction Endonucleolytic cleavage to 5'-phosphomonoester.. Digests double-stranded RNA. Involved in the processing of primary rRNA transcript to yield the immediate precursors to the large and small rRNAs (23S and 16S). Processes some mRNAs, and tRNAs when they are encoded in the rRNA operon. Processes pre-crRNA and tracrRNA of type II CRISPR loci if present in the organism. This is Ribonuclease 3 from Cereibacter sphaeroides (strain ATCC 17025 / ATH 2.4.3) (Rhodobacter sphaeroides).